We begin with the raw amino-acid sequence, 245 residues long: Eukaryotic translation initiation factor 3 subunit K (245 aa).

Residues 46 to 227 (YDCYANLALL…EAKGTVVREN (182 aa)) enclose the PCI domain.

Belongs to the eIF-3 subunit K family. Component of the eukaryotic translation initiation factor 3 (eIF-3) complex.

The protein localises to the cytoplasm. Component of the eukaryotic translation initiation factor 3 (eIF-3) complex, which is involved in protein synthesis of a specialized repertoire of mRNAs and, together with other initiation factors, stimulates binding of mRNA and methionyl-tRNAi to the 40S ribosome. The eIF-3 complex specifically targets and initiates translation of a subset of mRNAs involved in cell proliferation. This is Eukaryotic translation initiation factor 3 subunit K from Botryotinia fuckeliana (strain B05.10) (Noble rot fungus).